Reading from the N-terminus, the 513-residue chain is Zinc finger CCCH-type with G patch domain-containing protein (513 aa).

The segment at 155 to 178 adopts a C3H1-type zinc-finger fold; that stretch reads PCSYYLEGECRFDEAKCRFSHGAL. Acidic residues-rich tracts occupy residues 252–261 and 273–283; these read DQDEDDELSS and SDEAESDMDDL. Positions 252 to 283 are disordered; that stretch reads DQDEDDELSSEESTSSMRDASSDEAESDMDDL. One can recognise a G-patch domain in the interval 312–358; that stretch reads TRGIGSKLMEKMGYIHGTGLGSEGRGIVTPVSAQILPQGRSLDACME. Disordered stretches follow at residues 411–430 and 477–513; these read PGES…NNEL and QVQM…MFEF. The span at 477-495 shows a compositional bias: polar residues; the sequence is QVQMQSHKQELATLQAQER. Basic and acidic residues predominate over residues 496-513; the sequence is SLSKEQQTRKSKNKMFEF.

It is found in the nucleus. Its function is as follows. Transcription repressor. This chain is Zinc finger CCCH-type with G patch domain-containing protein, found in Drosophila sechellia (Fruit fly).